Here is a 398-residue protein sequence, read N- to C-terminus: Acetate kinase (398 aa).

N7 contacts Mg(2+). Position 14 (K14) interacts with ATP. Substrate is bound at residue R96. The Proton donor/acceptor role is filled by D153. Residues 210–214, 284–286, and 332–336 each bind ATP; these read HLGNG, DLR, and GIGEH. Mg(2+) is bound at residue E385.

The protein belongs to the acetokinase family. In terms of assembly, homodimer. It depends on Mg(2+) as a cofactor. Mn(2+) is required as a cofactor.

It is found in the cytoplasm. It carries out the reaction acetate + ATP = acetyl phosphate + ADP. It participates in metabolic intermediate biosynthesis; acetyl-CoA biosynthesis; acetyl-CoA from acetate: step 1/2. Catalyzes the formation of acetyl phosphate from acetate and ATP. Can also catalyze the reverse reaction. The sequence is that of Acetate kinase from Acaryochloris marina (strain MBIC 11017).